We begin with the raw amino-acid sequence, 241 residues long: Small ribosomal subunit protein uS2 (241 aa).

This sequence belongs to the universal ribosomal protein uS2 family.

The chain is Small ribosomal subunit protein uS2 from Shigella flexneri serotype 5b (strain 8401).